The primary structure comprises 136 residues: Transcription antitermination protein NusB (136 aa).

The protein belongs to the NusB family.

Functionally, involved in transcription antitermination. Required for transcription of ribosomal RNA (rRNA) genes. Binds specifically to the boxA antiterminator sequence of the ribosomal RNA (rrn) operons. The polypeptide is Transcription antitermination protein NusB (Paenarthrobacter aurescens (strain TC1)).